The primary structure comprises 32 residues: Photosystem II reaction center protein T (32 aa).

The chain crosses the membrane as a helical span at residues 3–23 (AITYTFILFLTLGLLFFAVAF).

The protein belongs to the PsbT family. PSII is composed of 1 copy each of membrane proteins PsbA, PsbB, PsbC, PsbD, PsbE, PsbF, PsbH, PsbI, PsbJ, PsbK, PsbL, PsbM, PsbT, PsbX, PsbY, PsbZ, Psb30/Ycf12, peripheral proteins PsbO, CyanoQ (PsbQ), PsbU, PsbV and a large number of cofactors. It forms dimeric complexes.

It is found in the cellular thylakoid membrane. Its function is as follows. Found at the monomer-monomer interface of the photosystem II (PS II) dimer, plays a role in assembly and dimerization of PSII. PSII is a light-driven water plastoquinone oxidoreductase, using light energy to abstract electrons from H(2)O, generating a proton gradient subsequently used for ATP formation. This Synechococcus sp. (strain JA-2-3B'a(2-13)) (Cyanobacteria bacterium Yellowstone B-Prime) protein is Photosystem II reaction center protein T.